A 215-amino-acid chain; its full sequence is Cytochrome b6 (215 aa).

A helical membrane pass occupies residues 32-52 (IFYCLGGITLTCFLVQVATGF). Cys35 contributes to the heme c binding site. His86 and His100 together coordinate heme b. Transmembrane regions (helical) follow at residues 90–110 (ASMM…TGGF), 116–136 (LTWV…VTGY), and 186–206 (LHTF…FLMI). Heme b contacts are provided by His187 and His202.

This sequence belongs to the cytochrome b family. PetB subfamily. In terms of assembly, the 4 large subunits of the cytochrome b6-f complex are cytochrome b6, subunit IV (17 kDa polypeptide, PetD), cytochrome f and the Rieske protein, while the 4 small subunits are PetG, PetL, PetM and PetN. The complex functions as a dimer. Heme b is required as a cofactor. The cofactor is heme c.

It is found in the plastid. It localises to the chloroplast thylakoid membrane. In terms of biological role, component of the cytochrome b6-f complex, which mediates electron transfer between photosystem II (PSII) and photosystem I (PSI), cyclic electron flow around PSI, and state transitions. This chain is Cytochrome b6, found in Pinus thunbergii (Japanese black pine).